The primary structure comprises 166 residues: Phosphopantetheine adenylyltransferase (166 aa).

A substrate-binding site is contributed by Ser-11. ATP contacts are provided by residues Ser-11 to Phe-12 and His-19. Substrate contacts are provided by Lys-43, Ala-76, and Arg-90. Residues Gly-91 to Arg-93, Glu-101, and Leu-126 to Ser-132 each bind ATP.

Belongs to the bacterial CoaD family. Homohexamer. It depends on Mg(2+) as a cofactor.

Its subcellular location is the cytoplasm. It carries out the reaction (R)-4'-phosphopantetheine + ATP + H(+) = 3'-dephospho-CoA + diphosphate. Its pathway is cofactor biosynthesis; coenzyme A biosynthesis; CoA from (R)-pantothenate: step 4/5. In terms of biological role, reversibly transfers an adenylyl group from ATP to 4'-phosphopantetheine, yielding dephospho-CoA (dPCoA) and pyrophosphate. The protein is Phosphopantetheine adenylyltransferase of Streptococcus equi subsp. zooepidemicus (strain MGCS10565).